A 424-amino-acid chain; its full sequence is L-glutamine:2-deoxy-scyllo-inosose aminotransferase (424 aa).

Lysine 202 bears the N6-(pyridoxal phosphate)lysine mark.

This sequence belongs to the DegT/DnrJ/EryC1 family. L-glutamine:2-deoxy-scyllo-inosose/scyllo-inosose aminotransferase subfamily. It depends on pyridoxal 5'-phosphate as a cofactor.

The catalysed reaction is 2-deoxy-L-scyllo-inosose + L-glutamine = 2-deoxy-scyllo-inosamine + 2-oxoglutaramate. The enzyme catalyses 3-amino-2,3-dideoxy-scyllo-inosose + L-glutamine = 2-deoxystreptamine + 2-oxoglutaramate. The protein operates within metabolic intermediate biosynthesis; 2-deoxystreptamine biosynthesis; 2-deoxystreptamine from D-glucose 6-phosphate: step 2/4. Its pathway is metabolic intermediate biosynthesis; 2-deoxystreptamine biosynthesis; 2-deoxystreptamine from D-glucose 6-phosphate: step 4/4. It participates in antibiotic biosynthesis; paromomycin biosynthesis. In terms of biological role, catalyzes the PLP-dependent transamination of 2-deoxy-scyllo-inosose (2-DOI) to form 2-deoxy-scyllo-inosamine (2-DOIA) using L-glutamine as the amino donor. Also catalyzes the transamination of 3-amino-2,3-dideoxy-scyllo-inosose (keto-2-DOIA) into 2-deoxystreptamine (2-DOS). The protein is L-glutamine:2-deoxy-scyllo-inosose aminotransferase (parS) of Streptomyces paromomycinus (Streptomyces rimosus subsp. paromomycinus).